We begin with the raw amino-acid sequence, 101 residues long: NAD(P)H-quinone oxidoreductase subunit 4L (101 aa).

The next 3 helical transmembrane spans lie at 3–23, 30–50, and 64–84; these read LQYF…GLVT, VLMS…AFSN, and IFVI…VLAI.

It belongs to the complex I subunit 4L family. As to quaternary structure, NDH-1 can be composed of about 15 different subunits; different subcomplexes with different compositions have been identified which probably have different functions.

The protein resides in the cellular thylakoid membrane. It catalyses the reaction a plastoquinone + NADH + (n+1) H(+)(in) = a plastoquinol + NAD(+) + n H(+)(out). It carries out the reaction a plastoquinone + NADPH + (n+1) H(+)(in) = a plastoquinol + NADP(+) + n H(+)(out). Functionally, NDH-1 shuttles electrons from an unknown electron donor, via FMN and iron-sulfur (Fe-S) centers, to quinones in the respiratory and/or the photosynthetic chain. The immediate electron acceptor for the enzyme in this species is believed to be plastoquinone. Couples the redox reaction to proton translocation, and thus conserves the redox energy in a proton gradient. Cyanobacterial NDH-1 also plays a role in inorganic carbon-concentration. The sequence is that of NAD(P)H-quinone oxidoreductase subunit 4L from Leptolyngbya boryana (Plectonema boryanum).